The sequence spans 217 residues: ATP phosphoribosyltransferase (217 aa).

It belongs to the ATP phosphoribosyltransferase family. Short subfamily. In terms of assembly, heteromultimer composed of HisG and HisZ subunits.

The protein resides in the cytoplasm. The catalysed reaction is 1-(5-phospho-beta-D-ribosyl)-ATP + diphosphate = 5-phospho-alpha-D-ribose 1-diphosphate + ATP. It functions in the pathway amino-acid biosynthesis; L-histidine biosynthesis; L-histidine from 5-phospho-alpha-D-ribose 1-diphosphate: step 1/9. Catalyzes the condensation of ATP and 5-phosphoribose 1-diphosphate to form N'-(5'-phosphoribosyl)-ATP (PR-ATP). Has a crucial role in the pathway because the rate of histidine biosynthesis seems to be controlled primarily by regulation of HisG enzymatic activity. In Burkholderia orbicola (strain AU 1054), this protein is ATP phosphoribosyltransferase.